The following is a 375-amino-acid chain: Platelet-derived growth factor receptor-like protein (375 aa).

The signal sequence occupies residues 1 to 21; sequence MKIWLLLGLLLMHEALEDVTG. A disordered region spans residues 20-64; that stretch reads TGQHPPKNKRPKEPGENRIKPTNKKVKPKIPKIKDRDSADPTPKT. The segment covering 40 to 50 has biased composition (basic residues); that stretch reads PTNKKVKPKIP. The Ig-like C2-type 1 domain maps to 62–159; sequence PKTQSIMTQM…GYVCRRDEAK (98 aa). A disulfide bridge connects residues Cys-96 and Cys-143. 2 N-linked (GlcNAc...) asparagine glycosylation sites follow: Asn-132 and Asn-219. Residues 272-373 enclose the Ig-like C2-type 2 domain; it reads PSTTILASSN…GQTTVATTVE (102 aa). Residues Cys-293 and Cys-357 are joined by a disulfide bond.

In terms of assembly, forms a complex composed of PDGFRL, TNK2 and GRB2.

The protein localises to the secreted. The chain is Platelet-derived growth factor receptor-like protein (PDGFRL) from Bos taurus (Bovine).